A 537-amino-acid polypeptide reads, in one-letter code: CTP synthase (537 aa).

Residues methionine 1–isoleucine 265 are amidoligase domain. Position 13 (serine 13) interacts with CTP. Serine 13 is a binding site for UTP. Residues serine 14–leucine 19 and aspartate 71 each bind ATP. Mg(2+) contacts are provided by aspartate 71 and glutamate 139. Residues aspartate 146–glutamate 148 and lysine 222 contribute to the CTP site. Lysine 222 is a UTP binding site. The 247-residue stretch at arginine 290–cysteine 536 folds into the Glutamine amidotransferase type-1 domain. Residue glycine 352 coordinates L-glutamine. Residue cysteine 379 is the Nucleophile; for glutamine hydrolysis of the active site. Residues phenylalanine 380–glutamine 383, glutamate 403, and arginine 464 contribute to the L-glutamine site. Catalysis depends on residues histidine 509 and glutamate 511.

It belongs to the CTP synthase family. In terms of assembly, homotetramer.

The enzyme catalyses UTP + L-glutamine + ATP + H2O = CTP + L-glutamate + ADP + phosphate + 2 H(+). The catalysed reaction is L-glutamine + H2O = L-glutamate + NH4(+). It carries out the reaction UTP + NH4(+) + ATP = CTP + ADP + phosphate + 2 H(+). It functions in the pathway pyrimidine metabolism; CTP biosynthesis via de novo pathway; CTP from UDP: step 2/2. Its activity is regulated as follows. Allosterically activated by GTP, when glutamine is the substrate; GTP has no effect on the reaction when ammonia is the substrate. The allosteric effector GTP functions by stabilizing the protein conformation that binds the tetrahedral intermediate(s) formed during glutamine hydrolysis. Inhibited by the product CTP, via allosteric rather than competitive inhibition. Functionally, catalyzes the ATP-dependent amination of UTP to CTP with either L-glutamine or ammonia as the source of nitrogen. Regulates intracellular CTP levels through interactions with the four ribonucleotide triphosphates. This chain is CTP synthase, found in Rickettsia rickettsii (strain Iowa).